Consider the following 244-residue polypeptide: Carbonic anhydrase (244 aa).

Positions 1–19 (MKGKFSIALMLSACFSASA) are cleaved as a signal peptide. The 222-residue stretch at 23 to 244 (VHWGYEGSGD…QPLNGRIIIH (222 aa)) folds into the Alpha-carbonic anhydrase domain. Residues Cys-46 and Cys-199 are joined by a disulfide bond. Residue His-84 is the Proton acceptor of the active site. 3 residues coordinate Zn(2+): His-109, His-111, and His-128. 195 to 196 (TT) is a substrate binding site.

This sequence belongs to the alpha-carbonic anhydrase family. Zn(2+) is required as a cofactor.

It localises to the periplasm. It catalyses the reaction hydrogencarbonate + H(+) = CO2 + H2O. Functionally, reversible hydration of carbon dioxide. The polypeptide is Carbonic anhydrase (cah) (Pectobacterium atrosepticum (strain SCRI 1043 / ATCC BAA-672) (Erwinia carotovora subsp. atroseptica)).